The primary structure comprises 86 residues: MTFEKKTVVDQFKVHATDTGSSEVQIAILTTRIKYLSDHFKKFPKDFASRVGFLKMIGQRRQLLDYLKKYNKDSYSSLIKRLYLRK.

This sequence belongs to the universal ribosomal protein uS15 family. In terms of assembly, part of the 30S ribosomal subunit. Forms a bridge to the 50S subunit in the 70S ribosome, contacting the 23S rRNA.

Its function is as follows. One of the primary rRNA binding proteins, it binds directly to 16S rRNA where it helps nucleate assembly of the platform of the 30S subunit by binding and bridging several RNA helices of the 16S rRNA. Functionally, forms an intersubunit bridge (bridge B4) with the 23S rRNA of the 50S subunit in the ribosome. This Endomicrobium trichonymphae protein is Small ribosomal subunit protein uS15.